Reading from the N-terminus, the 160-residue chain is Nucleotide-binding protein ASA_3207 (160 aa).

The protein belongs to the YajQ family.

In terms of biological role, nucleotide-binding protein. The polypeptide is Nucleotide-binding protein ASA_3207 (Aeromonas salmonicida (strain A449)).